Reading from the N-terminus, the 350-residue chain is Ribosomal RNA large subunit methyltransferase M (350 aa).

S-adenosyl-L-methionine-binding positions include 217 to 220 (APGG), aspartate 236, aspartate 256, and aspartate 272. The active-site Proton acceptor is the lysine 301.

This sequence belongs to the class I-like SAM-binding methyltransferase superfamily. RNA methyltransferase RlmE family. RlmM subfamily. As to quaternary structure, monomer.

It is found in the cytoplasm. The enzyme catalyses cytidine(2498) in 23S rRNA + S-adenosyl-L-methionine = 2'-O-methylcytidine(2498) in 23S rRNA + S-adenosyl-L-homocysteine + H(+). Catalyzes the 2'-O-methylation at nucleotide C2498 in 23S rRNA. The sequence is that of Ribosomal RNA large subunit methyltransferase M from Teredinibacter turnerae (strain ATCC 39867 / T7901).